A 155-amino-acid chain; its full sequence is Ribosome maturation factor RimP (155 aa).

This sequence belongs to the RimP family.

It localises to the cytoplasm. Functionally, required for maturation of 30S ribosomal subunits. The polypeptide is Ribosome maturation factor RimP (Prochlorococcus marinus (strain MIT 9301)).